The chain runs to 313 residues: L-lactate dehydrogenase 1 (313 aa).

Residues V15, D36, R41, and Y66 each coordinate NAD(+). Residues Q83, R89, and 121–124 each bind substrate; that span reads NPVD. NAD(+) contacts are provided by residues 119-121 and S144; that span reads ASN. Residue 149–152 coordinates substrate; it reads DTAR. Beta-D-fructose 1,6-bisphosphate contacts are provided by R154 and H169. The active-site Proton acceptor is the H176. Y218 carries the post-translational modification Phosphotyrosine. T227 serves as a coordination point for substrate.

Belongs to the LDH/MDH superfamily. LDH family. As to quaternary structure, homotetramer.

The protein resides in the cytoplasm. The enzyme catalyses (S)-lactate + NAD(+) = pyruvate + NADH + H(+). The protein operates within fermentation; pyruvate fermentation to lactate; (S)-lactate from pyruvate: step 1/1. Its activity is regulated as follows. Allosterically activated by fructose 1,6-bisphosphate (FBP). Catalyzes the conversion of lactate to pyruvate. The polypeptide is L-lactate dehydrogenase 1 (Listeria monocytogenes serotype 4b (strain F2365)).